A 525-amino-acid polypeptide reads, in one-letter code: Glucose-6-phosphate isomerase (525 aa).

The Proton donor role is filled by glutamate 347. Catalysis depends on residues histidine 378 and lysine 493.

Belongs to the GPI family.

The protein resides in the cytoplasm. It catalyses the reaction alpha-D-glucose 6-phosphate = beta-D-fructose 6-phosphate. It functions in the pathway carbohydrate biosynthesis; gluconeogenesis. It participates in carbohydrate degradation; glycolysis; D-glyceraldehyde 3-phosphate and glycerone phosphate from D-glucose: step 2/4. In terms of biological role, catalyzes the reversible isomerization of glucose-6-phosphate to fructose-6-phosphate. The chain is Glucose-6-phosphate isomerase from Chlamydia trachomatis serovar D (strain ATCC VR-885 / DSM 19411 / UW-3/Cx).